The following is a 453-amino-acid chain: Tol-Pal system protein TolB (453 aa).

Positions 1 to 31 (MINNLSVSMTKVLKIILTIIIILFNTLSILA) are cleaved as a signal peptide.

This sequence belongs to the TolB family. As to quaternary structure, the Tol-Pal system is composed of five core proteins: the inner membrane proteins TolA, TolQ and TolR, the periplasmic protein TolB and the outer membrane protein Pal. They form a network linking the inner and outer membranes and the peptidoglycan layer.

The protein resides in the periplasm. Part of the Tol-Pal system, which plays a role in outer membrane invagination during cell division and is important for maintaining outer membrane integrity. This is Tol-Pal system protein TolB from Orientia tsutsugamushi (strain Boryong) (Rickettsia tsutsugamushi).